Here is a 271-residue protein sequence, read N- to C-terminus: Acyl-[acyl-carrier-protein]--UDP-N-acetylglucosamine O-acyltransferase (271 aa).

It belongs to the transferase hexapeptide repeat family. LpxA subfamily. Homotrimer.

It is found in the cytoplasm. It catalyses the reaction a (3R)-hydroxyacyl-[ACP] + UDP-N-acetyl-alpha-D-glucosamine = a UDP-3-O-[(3R)-3-hydroxyacyl]-N-acetyl-alpha-D-glucosamine + holo-[ACP]. It functions in the pathway glycolipid biosynthesis; lipid IV(A) biosynthesis; lipid IV(A) from (3R)-3-hydroxytetradecanoyl-[acyl-carrier-protein] and UDP-N-acetyl-alpha-D-glucosamine: step 1/6. Involved in the biosynthesis of lipid A, a phosphorylated glycolipid that anchors the lipopolysaccharide to the outer membrane of the cell. This chain is Acyl-[acyl-carrier-protein]--UDP-N-acetylglucosamine O-acyltransferase, found in Azorhizobium caulinodans (strain ATCC 43989 / DSM 5975 / JCM 20966 / LMG 6465 / NBRC 14845 / NCIMB 13405 / ORS 571).